The chain runs to 922 residues: Up-regulator of cell proliferation (922 aa).

The segment at 1-20 is disordered; sequence MASSGHSDLGEVTSEIKASE. The residue at position 3 (S3) is a Phosphoserine. Positions 680-920 constitute a VLIG-type G domain; that stretch reads RSRLVVLSAL…NIQQLIELVR (241 aa).

It belongs to the TRAFAC class dynamin-like GTPase superfamily. Very large inducible GTPase (VLIG) family.

The protein resides in the cytoplasm. The protein localises to the nucleus. May be involved in cell cycle progression through the regulation of cyclin D1 expression. In Bos taurus (Bovine), this protein is Up-regulator of cell proliferation (URGCP).